We begin with the raw amino-acid sequence, 524 residues long: uncharacterized protein (524 aa).

Over residues 83–101 (NSTPSKQAKPLQRNSPYQG) the composition is skewed to polar residues. Disordered stretches follow at residues 83 to 108 (NSTPSKQAKPLQRNSPYQGNSQSENQ) and 155 to 179 (PPCNIETNEDDSGNNEYNNNKKRPR).

Its subcellular location is the cytoplasm. This is an uncharacterized protein from Saccharomyces cerevisiae (strain ATCC 204508 / S288c) (Baker's yeast).